A 255-amino-acid polypeptide reads, in one-letter code: Small ribosomal subunit protein uS2 (255 aa).

The protein belongs to the universal ribosomal protein uS2 family.

The polypeptide is Small ribosomal subunit protein uS2 (rpsB) (Streptococcus pyogenes serotype M1).